The chain runs to 304 residues: uncharacterized protein (304 aa).

Catalysis depends on charge relay system residues threonine 58 and tyrosine 121. Tyrosine 147 (proton donor) is an active-site residue. Lysine 175 acts as the Schiff-base intermediate with substrate in catalysis.

It belongs to the DapA family. As to quaternary structure, homotetramer.

The protein localises to the cytoplasm. This is an uncharacterized protein from Halobacterium salinarum (strain ATCC 29341 / DSM 671 / R1).